Here is a 205-residue protein sequence, read N- to C-terminus: MPSVSELTKEEEETLAAKLEQQELEHSDEPILEDDEDDDDEEDDNDEDDAQGEQGGEGKSKQSRSEKKCRKAMLKLGMKPVSGVSRVTIKKSKNILFVISNPDVFKSPTSDTYIAFGEAKIEDLSSQLQTQAAEQFKAPNLSHVTMKPESSTAAQEDEDEVDDTGVEPKDIELVMTQAGVSRTKAVKALKAADGDIVSAIMDLTT.

Disordered regions lie at residues methionine 1–methionine 73 and lysine 137–valine 166. Over residues glutamate 20–glutamate 29 the composition is skewed to basic and acidic residues. Acidic residues predominate over residues proline 30–glutamine 51. The span at glycine 56–glutamate 66 shows a compositional bias: basic and acidic residues. The 66-residue stretch at serine 63 to leucine 128 folds into the NAC-A/B domain. Over residues glutamine 155–glycine 165 the composition is skewed to acidic residues. One can recognise a UBA domain in the interval valine 166 to leucine 203.

It belongs to the NAC-alpha family.

In terms of biological role, may promote appropriate targeting of ribosome-nascent polypeptide complexes. The polypeptide is Nascent polypeptide-associated complex subunit alpha-like protein (Pinus taeda (Loblolly pine)).